The chain runs to 97 residues: Small ribosomal subunit protein uS19 (97 aa).

The protein belongs to the universal ribosomal protein uS19 family.

Functionally, protein S19 forms a complex with S13 that binds strongly to the 16S ribosomal RNA. This is Small ribosomal subunit protein uS19 from Salinibacter ruber (strain DSM 13855 / M31).